The primary structure comprises 304 residues: Putative integrase/recombinase HI_1414 (304 aa).

In terms of domain architecture, Core-binding (CB) spans 30–109 (TLFSDVIKRY…TIGHIFKIAL (80 aa)). The Tyr recombinase domain occupies 131–304 (PRTQRVTEEN…DMAEVAELLD (174 aa)). Catalysis depends on residues Arg174, Lys199, His256, Arg259, and His281. Catalysis depends on Tyr291, which acts as the O-(3'-phospho-DNA)-tyrosine intermediate.

Belongs to the 'phage' integrase family.

This Haemophilus influenzae (strain ATCC 51907 / DSM 11121 / KW20 / Rd) protein is Putative integrase/recombinase HI_1414.